A 506-amino-acid polypeptide reads, in one-letter code: Procardosin-B (506 aa).

Residues 1–24 (MGTPIKASLLALFLFFLLSPTAFS) form the signal peptide. Positions 25–70 (VSNGGLLRVGLKKRKVDRLDQLRAHGVHMLGNARKDFGFRRTLSDS) are excised as a propeptide. One can recognise a Peptidase A1 domain in the interval 85 to 503 (YYGEIGIGTP…DYGKLRVGFA (419 aa)). Asp-103 is a catalytic residue. Cys-116 and Cys-122 are joined by a disulfide. Asn-139 and Asn-252 each carry an N-linked (GlcNAc...) asparagine glycan. Cys-281 and Cys-285 are joined by a disulfide. The active site involves Asp-290. A Saposin B-type domain is found at 315–417 (VLNQQCKTLV…NEVCDQLPTS (103 aa)). 4 disulfide bridges follow: Cys-320-Cys-411, Cys-345-Cys-383, Cys-351-Cys-380, and Cys-425-Cys-462. The N-linked (GlcNAc...) asparagine glycan is linked to Asn-397.

This sequence belongs to the peptidase A1 family. In terms of assembly, heterodimer of a light chain and a heavy chain. An intermediate form is produced first, and undergoes proteolytic processing to remove the internal plant-specific insert (PSI) and the propeptide. Detected in pistils, but not in seeds, bracts, midribs, roots, leaves or stamen extracts. Detected in seeds. In stigmas and styles, detected in the transmitting tissue and in contiguous subepidermal layers at the longitudenal grooves of the stigma (at protein level).

The protein localises to the microsome membrane. The protein resides in the protein storage vacuole. It localises to the secreted. It is found in the cell wall. Its subcellular location is the extracellular space. The protein localises to the extracellular matrix. With respect to regulation, inhibited by the specific aspartic proteinase inhibitors diazoacetyl-noleucine methyl ester and pepstatin. Its function is as follows. Aspartic protease. Cleaves alpha-lactalbumin but not beta-lactoglobulin. This is Procardosin-B from Cynara cardunculus (Cardoon).